Reading from the N-terminus, the 97-residue chain is Putative septation protein SpoVG (97 aa).

This sequence belongs to the SpoVG family.

Functionally, could be involved in septation. This is Putative septation protein SpoVG from Borreliella afzelii (strain PKo) (Borrelia afzelii).